The primary structure comprises 145 residues: NADH-quinone oxidoreductase subunit A 1 (145 aa).

3 helical membrane-spanning segments follow: residues 18–38, 71–91, and 104–124; these read ILPLGLYVAATVLLIGILLLA, VPFYLVAIFFIVFDVEAVFIF, and GLIHITAFIIVLLLGLVWLWL.

Belongs to the complex I subunit 3 family. NDH-1 is composed of 14 different subunits. Subunits NuoA, H, J, K, L, M, N constitute the membrane sector of the complex.

The protein localises to the cell inner membrane. The catalysed reaction is a quinone + NADH + 5 H(+)(in) = a quinol + NAD(+) + 4 H(+)(out). Functionally, NDH-1 shuttles electrons from NADH, via FMN and iron-sulfur (Fe-S) centers, to quinones in the respiratory chain. The immediate electron acceptor for the enzyme in this species is believed to be ubiquinone. Couples the redox reaction to proton translocation (for every two electrons transferred, four hydrogen ions are translocated across the cytoplasmic membrane), and thus conserves the redox energy in a proton gradient. The chain is NADH-quinone oxidoreductase subunit A 1 from Geotalea uraniireducens (strain Rf4) (Geobacter uraniireducens).